A 445-amino-acid chain; its full sequence is Oxysterols receptor LXR-alpha (445 aa).

Disordered regions lie at residues 1–34 (MSLW…QGGN) and 63–86 (ALLP…KKGP). Positions 1–94 (MSLWLEASMP…GPAPKMLGNE (94 aa)) are transactivation AF-1; required for ligand-independent transactivation function. The segment at residues 93–168 (NELCSVCGDK…AGMREECVLS (76 aa)) is a DNA-binding region (nuclear receptor). 2 NR C4-type zinc fingers span residues 96 to 116 (CSVC…CEGC) and 132 to 156 (CHSG…LRKC). S191 is modified (phosphoserine). The segment at 203–445 (QLSPEQLGMI…LLSEIWDVHE (243 aa)) is transactivation AF-2; required for ligand-dependent transactivation function; mediates interaction with CCAR2. Residues 207–445 (EQLGMIEKLV…LLSEIWDVHE (239 aa)) form the NR LBD domain.

This sequence belongs to the nuclear hormone receptor family. NR1 subfamily. As to quaternary structure, heterodimer of NR1H3 and RXR (retinoic acid receptor). Interacts with CCAR2 (via N-terminus) in a ligand-independent manner. Interacts with SIRT1 and this interaction is inhibited by CCAR2. Post-translationally, ubiquitinated. Ubiquitination by UBR5 leads to its degradation: UBR5 specifically recognizes and binds ligand-bound NR1H3 when it is not associated with coactivators (NCOAs). In presence of NCOAs, the UBR5-degron is not accessible, preventing its ubiquitination and degradation.

Its subcellular location is the nucleus. The protein resides in the cytoplasm. Nuclear receptor that exhibits a ligand-dependent transcriptional activation activity. Interaction with retinoic acid receptor (RXR) shifts RXR from its role as a silent DNA-binding partner to an active ligand-binding subunit in mediating retinoid responses through target genes defined by LXRES. LXRES are DR4-type response elements characterized by direct repeats of two similar hexanuclotide half-sites spaced by four nucleotides. Plays an important role in the regulation of cholesterol homeostasis, regulating cholesterol uptake through MYLIP-dependent ubiquitination of LDLR, VLDLR and LRP8. Interplays functionally with RORA for the regulation of genes involved in liver metabolism. Induces LPCAT3-dependent phospholipid remodeling in endoplasmic reticulum (ER) membranes of hepatocytes, driving SREBF1 processing and lipogenesis. Via LPCAT3, triggers the incorporation of arachidonate into phosphatidylcholines of ER membranes, increasing membrane dynamics and enabling triacylglycerols transfer to nascent very low-density lipoprotein (VLDL) particles. Via LPCAT3 also counteracts lipid-induced ER stress response and inflammation, likely by modulating SRC kinase membrane compartmentalization and limiting the synthesis of lipid inflammatory mediators. The sequence is that of Oxysterols receptor LXR-alpha (Nr1h3) from Mus musculus (Mouse).